Consider the following 154-residue polypeptide: UPF0178 protein ABC1688 (154 aa).

This sequence belongs to the UPF0178 family.

This is UPF0178 protein ABC1688 from Shouchella clausii (strain KSM-K16) (Alkalihalobacillus clausii).